The sequence spans 78 residues: DNA-directed RNA polymerase subunit Rpo5 (78 aa).

The protein belongs to the archaeal Rpo5/eukaryotic RPB5 RNA polymerase subunit family. Part of the RNA polymerase complex.

It is found in the cytoplasm. It catalyses the reaction RNA(n) + a ribonucleoside 5'-triphosphate = RNA(n+1) + diphosphate. Functionally, DNA-dependent RNA polymerase (RNAP) catalyzes the transcription of DNA into RNA using the four ribonucleoside triphosphates as substrates. This is DNA-directed RNA polymerase subunit Rpo5 from Methanococcus maripaludis (strain C7 / ATCC BAA-1331).